A 371-amino-acid chain; its full sequence is MAELQEVQITEEKPLLPGQTPEAAKEAELAARILLDQGQTHSVETPYGSVTFTVYGTPKPKRPAILTYHDVGLNYKSCFQPLFQFEDMQEIIQNFVRVHVDAPGMEEGAPVFPLGYQYPSLDQLADMIPCVLQYLNFSTIIGVGVGAGAYILARYALNHPDTVEGLVLINIDPNAKGWMDWAAHKLTGLTSSIPEMILGHLFSQEELSGNSELIQKYRNIITHAPNLDNIELYWNSYNNRRDLNFERGGDITLKCPVMLVVGDQAPHEDAVVECNSKLDPTQTSFLKMADSGGQPQLTQPGKLTEAFKYFLQGMGYMASSCMTRLSRSRTASLTSAASVDGNRSRSRTLSQSSESGTLSSGPPGHTMEVSC.

The segment at 1 to 21 is disordered; the sequence is MAELQEVQITEEKPLLPGQTP. N-acetylalanine is present on Ala2. Thr20 carries the post-translational modification Phosphothreonine. Ser326 and Ser328 each carry phosphoserine. A Phosphothreonine modification is found at Thr330. Ser332 carries the post-translational modification Phosphoserine. Thr334 is modified (phosphothreonine). The segment at 334–371 is disordered; sequence TSAASVDGNRSRSRTLSQSSESGTLSSGPPGHTMEVSC. A phosphoserine mark is found at Ser335, Ser338, and Ser344. A compositionally biased stretch (low complexity) spans 347 to 361; sequence RTLSQSSESGTLSSG. At Thr348 the chain carries Phosphothreonine. 4 positions are modified to phosphoserine: Ser350, Ser352, Ser353, and Ser355. At Thr357 the chain carries Phosphothreonine. Ser370 carries the post-translational modification Phosphoserine.

This sequence belongs to the NDRG family. As to quaternary structure, interacts with CTNNB1.

Its subcellular location is the cytoplasm. It localises to the perinuclear region. It is found in the cell projection. The protein localises to the growth cone. Its function is as follows. Contributes to the regulation of the Wnt signaling pathway. Down-regulates CTNNB1-mediated transcriptional activation of target genes, such as CCND1, and may thereby act as tumor suppressor. May be involved in dendritic cell and neuron differentiation. This chain is Protein NDRG2 (NDRG2), found in Pongo abelii (Sumatran orangutan).